The primary structure comprises 96 residues: Pyrimidine/purine nucleoside phosphorylase (96 aa).

This sequence belongs to the nucleoside phosphorylase PpnP family.

It carries out the reaction a purine D-ribonucleoside + phosphate = a purine nucleobase + alpha-D-ribose 1-phosphate. The catalysed reaction is adenosine + phosphate = alpha-D-ribose 1-phosphate + adenine. The enzyme catalyses cytidine + phosphate = cytosine + alpha-D-ribose 1-phosphate. It catalyses the reaction guanosine + phosphate = alpha-D-ribose 1-phosphate + guanine. It carries out the reaction inosine + phosphate = alpha-D-ribose 1-phosphate + hypoxanthine. The catalysed reaction is thymidine + phosphate = 2-deoxy-alpha-D-ribose 1-phosphate + thymine. The enzyme catalyses uridine + phosphate = alpha-D-ribose 1-phosphate + uracil. It catalyses the reaction xanthosine + phosphate = alpha-D-ribose 1-phosphate + xanthine. In terms of biological role, catalyzes the phosphorolysis of diverse nucleosides, yielding D-ribose 1-phosphate and the respective free bases. Can use uridine, adenosine, guanosine, cytidine, thymidine, inosine and xanthosine as substrates. Also catalyzes the reverse reactions. The polypeptide is Pyrimidine/purine nucleoside phosphorylase (Erwinia tasmaniensis (strain DSM 17950 / CFBP 7177 / CIP 109463 / NCPPB 4357 / Et1/99)).